A 515-amino-acid polypeptide reads, in one-letter code: Maturase K (515 aa).

Belongs to the intron maturase 2 family. MatK subfamily.

It localises to the plastid. The protein resides in the chloroplast. Usually encoded in the trnK tRNA gene intron. Probably assists in splicing its own and other chloroplast group II introns. The chain is Maturase K from Pinus leiophylla (Chihuahua pine).